The sequence spans 575 residues: GBF-interacting protein 1-like (575 aa).

Disordered stretches follow at residues 66 to 171 (SKRE…SKSD) and 229 to 296 (SSSN…VVHS). Polar residues-rich tracts occupy residues 90 to 102 (FASS…SGRN), 115 to 138 (TRGS…NETK), and 161 to 171 (ISASRCSSKSD). A compositionally biased stretch (basic and acidic residues) spans 268–281 (AREETSTVSEDKDY).

This sequence belongs to the GIP1 family. Expressed in roots, leaves, stems and flowers.

It localises to the nucleus. Functionally, may act as a transcriptional coactivator of LOB domain-containing proteins. The chain is GBF-interacting protein 1-like from Arabidopsis thaliana (Mouse-ear cress).